The following is a 200-amino-acid chain: Transcription elongation factor A protein-like 3 (200 aa).

The tract at residues 1–200 is disordered; sequence MEKPYNKNEG…QRGLHDIPYL (200 aa). Positions 20–36 are enriched in acidic residues; sequence DEVEPDDEGKSDEEEKP. Ser30 carries the post-translational modification Phosphoserine. Residues 37 to 50 are compositionally biased toward basic and acidic residues; sequence DVEGKTECEGKRED. Over residues 51-64 the composition is skewed to acidic residues; sequence EGEPGDEGQLEDEG. Position 65 is a phosphoserine (Ser65). Basic and acidic residues-rich tracts occupy residues 65-80, 96-107, and 115-154; these read SQEK…KPQG, AAEKRPAEDYVP, and DRGT…EELR.

The protein belongs to the TFS-II family. TFA subfamily.

The protein resides in the nucleus. Functionally, may be involved in transcriptional regulation. This chain is Transcription elongation factor A protein-like 3 (TCEAL3), found in Homo sapiens (Human).